Consider the following 557-residue polypeptide: Glucose-6-phosphate isomerase (557 aa).

E361 functions as the Proton donor in the catalytic mechanism. Active-site residues include H392 and K520.

The protein belongs to the GPI family.

The protein resides in the cytoplasm. It carries out the reaction alpha-D-glucose 6-phosphate = beta-D-fructose 6-phosphate. Its pathway is carbohydrate biosynthesis; gluconeogenesis. The protein operates within carbohydrate degradation; glycolysis; D-glyceraldehyde 3-phosphate and glycerone phosphate from D-glucose: step 2/4. Its function is as follows. Catalyzes the reversible isomerization of glucose-6-phosphate to fructose-6-phosphate. The protein is Glucose-6-phosphate isomerase of Acinetobacter baylyi (strain ATCC 33305 / BD413 / ADP1).